Consider the following 76-residue polypeptide: Rhesus theta defensin-1/3 subunit A (76 aa).

Residues 1 to 22 (MRTFALLTAMLLLVALHAQAEA) form the signal peptide. Residues 23 to 64 (RQARADEAAAQQQPGTDDQGMAHSFTWPENAALPLSESAKGL) constitute a propeptide that is removed on maturation. The tract at residues 25 to 45 (ARADEAAAQQQPGTDDQGMAH) is disordered. Arginine 65 participates in a covalent cross-link: Cyclopeptide (Arg-Cys) (interchain with C-73 in subunit A); in form RTD-3. Arginine 65 participates in a covalent cross-link: Cyclopeptide (Arg-Cys) (interchain with C-73 in subunit B); in form RTD-1. An intrachain disulfide couples cysteine 68 to cysteine 73. Residue cysteine 73 forms a Cyclopeptide (Cys-Arg) (interchain with R-65 in subunit A); in form RTD-3 linkage. A Cyclopeptide (Cys-Arg) (interchain with R-65 in subunit B); in form RTD-1 cross-link involves residue cysteine 73. Residues 74–76 (RLL) constitute a propeptide that is removed on maturation.

This sequence belongs to the alpha-defensin family. Theta subfamily. RTD-1 is a cyclic heterodimer composed of subunits A and B; disulfide-linked. RTD-3 is a cyclic homodimer composed of two subunits A; disulfide-linked. Forms a cyclic peptide with subunit A (RTD-3) or with subunit B (RTD-1). An additional intersubunit disulfide bond is formed. In terms of tissue distribution, RTD-1 is expressed in bone marrow. Detected in promyelocytes, myelocytes and mature neutrophils and monocytes.

In terms of biological role, RTD-1 and RTD-3 have similar antimicrobial activities against the Gram-positive bacteria S.aureus 502A and L.monocytogenes, the Gram-negative bacteria S.typhimurium and E.coli ML35, and the fungi C.albicans 16820 and C.neoformans 271A. In Macaca mulatta (Rhesus macaque), this protein is Rhesus theta defensin-1/3 subunit A (RTD1A).